The primary structure comprises 148 residues: Putative pre-16S rRNA nuclease (148 aa).

This sequence belongs to the YqgF nuclease family.

It localises to the cytoplasm. Its function is as follows. Could be a nuclease involved in processing of the 5'-end of pre-16S rRNA. This Chromohalobacter salexigens (strain ATCC BAA-138 / DSM 3043 / CIP 106854 / NCIMB 13768 / 1H11) protein is Putative pre-16S rRNA nuclease.